We begin with the raw amino-acid sequence, 56 residues long: Large ribosomal subunit protein bL32 (56 aa).

The span at 1–16 (MAVQKNRKTRSKRGMR) shows a compositional bias: basic residues. A disordered region spans residues 1–28 (MAVQKNRKTRSKRGMRRSHDALTTAALS).

Belongs to the bacterial ribosomal protein bL32 family.

In Vibrio campbellii (strain ATCC BAA-1116), this protein is Large ribosomal subunit protein bL32.